Reading from the N-terminus, the 263-residue chain is Endonuclease 8 (263 aa).

Pro-2 acts as the Schiff-base intermediate with DNA in catalysis. Glu-3 functions as the Proton donor in the catalytic mechanism. Lys-53 functions as the Proton donor; for beta-elimination activity in the catalytic mechanism. Positions 70, 125, and 169 each coordinate DNA. An FPG-type zinc finger spans residues 229-263 (KVFHRDGEPCERCGGIIEKTTLSSRPFYWCPGCQH). Residue Arg-253 is the Proton donor; for delta-elimination activity of the active site.

The protein belongs to the FPG family. Requires Zn(2+) as cofactor.

It carries out the reaction 2'-deoxyribonucleotide-(2'-deoxyribose 5'-phosphate)-2'-deoxyribonucleotide-DNA = a 3'-end 2'-deoxyribonucleotide-(2,3-dehydro-2,3-deoxyribose 5'-phosphate)-DNA + a 5'-end 5'-phospho-2'-deoxyribonucleoside-DNA + H(+). Involved in base excision repair of DNA damaged by oxidation or by mutagenic agents. Acts as a DNA glycosylase that recognizes and removes damaged bases. Has a preference for oxidized pyrimidines, such as thymine glycol, 5,6-dihydrouracil and 5,6-dihydrothymine. Has AP (apurinic/apyrimidinic) lyase activity and introduces nicks in the DNA strand. Cleaves the DNA backbone by beta-delta elimination to generate a single-strand break at the site of the removed base with both 3'- and 5'-phosphates. This Escherichia coli O127:H6 (strain E2348/69 / EPEC) protein is Endonuclease 8.